The chain runs to 325 residues: Ribosomal RNA small subunit methyltransferase H (325 aa).

Residues 33 to 35 (GGH), Asp-52, Leu-87, Asp-101, and Gln-108 each bind S-adenosyl-L-methionine. The interval 285 to 325 (AEPAGEVEKADNPRAASVRLRAAERTAPNPDRTQPTIGGAS) is disordered. The segment covering 315–325 (DRTQPTIGGAS) has biased composition (polar residues).

This sequence belongs to the methyltransferase superfamily. RsmH family.

It is found in the cytoplasm. The catalysed reaction is cytidine(1402) in 16S rRNA + S-adenosyl-L-methionine = N(4)-methylcytidine(1402) in 16S rRNA + S-adenosyl-L-homocysteine + H(+). Functionally, specifically methylates the N4 position of cytidine in position 1402 (C1402) of 16S rRNA. The sequence is that of Ribosomal RNA small subunit methyltransferase H from Frankia alni (strain DSM 45986 / CECT 9034 / ACN14a).